Consider the following 547-residue polypeptide: MAAKDVKFSGDARDRMLRGVDILANAVKVTLGPKGRNVVIEKSFGAPRITKDGVTVAKEIELEDKFENMGAQMLREVASKTNDLAGDGTTTATVLAQAIVREGAKAVAAGMNPMDLKRGIDTAVAAVIKDIEKRAKPVASSAEVAQVGTISANGDAAIGKMIAQAMQKVGNEGVITVEENKSLETEVDIVEGMKFDRGYLSPYFVTNAEKMTAELDDVYVLLHEKKLSGLQAMLPVLEAVVQSGRPLLIIAEDVEGEALATLVVNRLRGGLKVAAVKAPGFGDRRKAMLEDIAILTGGQLISDDLGMKLENVTIKMLGRAKKVVIDKENTTIVNGAGKKADIEARVGQIKAQIEETTSDYDREKLQERLAKLAGGVAVIRVGGATEVEVKEKKDRVEDALNATRAAVQEGIVPGGGVALLRAKKAVGRITNPNSDVQAGINIVLKALEAPMRQIAENAGVEGSIVVGKILEEKSETFGFDAQTEDYVDMVAKGIIDPAKVVRTALQDASSVAGLLVTTEAMVAELPKDAAPAMPAGGGMGGMGGMGF.

Residues 30–33 (TLGP), lysine 51, 87–91 (DGTTT), glycine 415, and aspartate 496 contribute to the ATP site.

This sequence belongs to the chaperonin (HSP60) family. Forms a cylinder of 14 subunits composed of two heptameric rings stacked back-to-back. Interacts with the co-chaperonin GroES.

The protein localises to the cytoplasm. It carries out the reaction ATP + H2O + a folded polypeptide = ADP + phosphate + an unfolded polypeptide.. Functionally, together with its co-chaperonin GroES, plays an essential role in assisting protein folding. The GroEL-GroES system forms a nano-cage that allows encapsulation of the non-native substrate proteins and provides a physical environment optimized to promote and accelerate protein folding. The chain is Chaperonin GroEL 3 from Bradyrhizobium sp. (strain ORS 278).